The primary structure comprises 365 residues: Aminomethyltransferase (365 aa).

The protein belongs to the GcvT family. The glycine cleavage system is composed of four proteins: P, T, L and H.

The catalysed reaction is N(6)-[(R)-S(8)-aminomethyldihydrolipoyl]-L-lysyl-[protein] + (6S)-5,6,7,8-tetrahydrofolate = N(6)-[(R)-dihydrolipoyl]-L-lysyl-[protein] + (6R)-5,10-methylene-5,6,7,8-tetrahydrofolate + NH4(+). The glycine cleavage system catalyzes the degradation of glycine. This chain is Aminomethyltransferase, found in Natranaerobius thermophilus (strain ATCC BAA-1301 / DSM 18059 / JW/NM-WN-LF).